The following is a 675-amino-acid chain: Methionine--tRNA ligase (675 aa).

The 'HIGH' region signature appears at P15–H25. 4 residues coordinate Zn(2+): C146, C149, C159, and C162. Residues K332–S336 carry the 'KMSKS' region motif. K335 contributes to the ATP binding site. The tRNA-binding domain occupies D574–K675.

The protein belongs to the class-I aminoacyl-tRNA synthetase family. MetG type 1 subfamily. In terms of assembly, homodimer. Zn(2+) serves as cofactor.

It localises to the cytoplasm. The enzyme catalyses tRNA(Met) + L-methionine + ATP = L-methionyl-tRNA(Met) + AMP + diphosphate. Is required not only for elongation of protein synthesis but also for the initiation of all mRNA translation through initiator tRNA(fMet) aminoacylation. This is Methionine--tRNA ligase from Tolumonas auensis (strain DSM 9187 / NBRC 110442 / TA 4).